Reading from the N-terminus, the 73-residue chain is MKSSMAVLLVMGLIIFTLDKCYSTDDKPIGKCGEKQRSKLCRVCHNRSGIDNYYSGCCIYDGTYFMCLDMLHP.

The first 23 residues, 1 to 23 (MKSSMAVLLVMGLIIFTLDKCYS), serve as a signal peptide directing secretion.

In terms of processing, contains 3 disulfide bonds. In terms of tissue distribution, expressed by the venom gland.

Its subcellular location is the secreted. In Scolopendra dehaani (Thai centipede), this protein is U-scoloptoxin(03)-Ssd1b.